The primary structure comprises 520 residues: Probable E3 ubiquitin-protein ligase XBOS33 (520 aa).

ANK repeat units lie at residues 44 to 73 (GLNS…DVNV), 77 to 106 (CGQT…NVTR), 111 to 140 (SGRT…PSAP), 185 to 214 (GGVT…NVSA), and 228 to 258 (AGST…KLTL). The RING-type zinc finger occupies 327-377 (CAVCLERSCSVAAEGCCHEFCIKCALYLCSTSNTRVEFTGPPGSIPCPLCR). The span at 467-479 (QDGSEVQSPQPSH) shows a compositional bias: polar residues. The interval 467-493 (QDGSEVQSPQPSHCASMEMDKREQQDL) is disordered. Residues 484–493 (EMDKREQQDL) are compositionally biased toward basic and acidic residues.

The enzyme catalyses S-ubiquitinyl-[E2 ubiquitin-conjugating enzyme]-L-cysteine + [acceptor protein]-L-lysine = [E2 ubiquitin-conjugating enzyme]-L-cysteine + N(6)-ubiquitinyl-[acceptor protein]-L-lysine.. It functions in the pathway protein modification; protein ubiquitination. The protein is Probable E3 ubiquitin-protein ligase XBOS33 (XBOS33) of Oryza sativa subsp. japonica (Rice).